Reading from the N-terminus, the 134-residue chain is Transcription antitermination protein NusB (134 aa).

Belongs to the NusB family.

In terms of biological role, involved in transcription antitermination. Required for transcription of ribosomal RNA (rRNA) genes. Binds specifically to the boxA antiterminator sequence of the ribosomal RNA (rrn) operons. This Shewanella sp. (strain MR-4) protein is Transcription antitermination protein NusB.